The sequence spans 475 residues: Ribulose bisphosphate carboxylase large chain (475 aa).

A propeptide spanning residues 1 to 2 (MS) is cleaved from the precursor. An N-acetylproline modification is found at proline 3. Position 14 is an N6,N6,N6-trimethyllysine (lysine 14). Positions 123 and 173 each coordinate substrate. Lysine 175 acts as the Proton acceptor in catalysis. Lysine 177 is a substrate binding site. Residues lysine 201, aspartate 203, and glutamate 204 each contribute to the Mg(2+) site. Position 201 is an N6-carboxylysine (lysine 201). The active-site Proton acceptor is histidine 294. Positions 295, 327, and 379 each coordinate substrate.

Belongs to the RuBisCO large chain family. Type I subfamily. As to quaternary structure, heterohexadecamer of 8 large chains and 8 small chains; disulfide-linked. The disulfide link is formed within the large subunit homodimers. Requires Mg(2+) as cofactor. The disulfide bond which can form in the large chain dimeric partners within the hexadecamer appears to be associated with oxidative stress and protein turnover.

The protein resides in the plastid. It is found in the chloroplast. It carries out the reaction 2 (2R)-3-phosphoglycerate + 2 H(+) = D-ribulose 1,5-bisphosphate + CO2 + H2O. It catalyses the reaction D-ribulose 1,5-bisphosphate + O2 = 2-phosphoglycolate + (2R)-3-phosphoglycerate + 2 H(+). Functionally, ruBisCO catalyzes two reactions: the carboxylation of D-ribulose 1,5-bisphosphate, the primary event in carbon dioxide fixation, as well as the oxidative fragmentation of the pentose substrate in the photorespiration process. Both reactions occur simultaneously and in competition at the same active site. This chain is Ribulose bisphosphate carboxylase large chain, found in Castanea sativa (Sweet chestnut).